A 1106-amino-acid chain; its full sequence is Carbamoyl phosphate synthase large chain (1106 aa).

The interval 1–401 is carboxyphosphate synthetic domain; the sequence is MPKRNDLNKV…AFLKALRSLE (401 aa). ATP contacts are provided by Arg129, Arg169, Gly175, Gly176, Arg208, Val210, Glu215, Gly241, Val242, His243, Gln284, and Glu298. Residues 133-327 form the ATP-grasp 1 domain; that stretch reads KTTMNDIGEP…IARVASKIAI (195 aa). Mg(2+) contacts are provided by Gln284, Glu298, and Asn300. Positions 284, 298, and 300 each coordinate Mn(2+). The tract at residues 402-577 is oligomerization domain; sequence IDLDDLHQSI…YSAYNEENEA (176 aa). Residues 578-964 form a carbamoyl phosphate synthetic domain region; that stretch reads IPPSEPTHDK…ALYKAMLASG (387 aa). The ATP-grasp 2 domain maps to 706–896; it reads DQLLNKLGID…MVKIATKAMM (191 aa). ATP-binding residues include Arg742, Gln781, Leu783, Glu787, Gly812, Val813, His814, Ser815, Gln855, and Glu867. Residues Gln855, Glu867, and Asn869 each coordinate Mg(2+). Mn(2+)-binding residues include Gln855, Glu867, and Asn869. The 142-residue stretch at 965-1106 folds into the MGS-like domain; that stretch reads FSINLNGGVL…LQDYLKELSN (142 aa). The allosteric domain stretch occupies residues 965–1106; sequence FSINLNGGVL…LQDYLKELSN (142 aa).

The protein belongs to the CarB family. Composed of two chains; the small (or glutamine) chain promotes the hydrolysis of glutamine to ammonia, which is used by the large (or ammonia) chain to synthesize carbamoyl phosphate. Tetramer of heterodimers (alpha,beta)4. The cofactor is Mg(2+). Mn(2+) is required as a cofactor.

The catalysed reaction is hydrogencarbonate + L-glutamine + 2 ATP + H2O = carbamoyl phosphate + L-glutamate + 2 ADP + phosphate + 2 H(+). The enzyme catalyses hydrogencarbonate + NH4(+) + 2 ATP = carbamoyl phosphate + 2 ADP + phosphate + 2 H(+). The protein operates within amino-acid biosynthesis; L-arginine biosynthesis; carbamoyl phosphate from bicarbonate: step 1/1. It functions in the pathway pyrimidine metabolism; UMP biosynthesis via de novo pathway; (S)-dihydroorotate from bicarbonate: step 1/3. Functionally, large subunit of the glutamine-dependent carbamoyl phosphate synthetase (CPSase). CPSase catalyzes the formation of carbamoyl phosphate from the ammonia moiety of glutamine, carbonate, and phosphate donated by ATP, constituting the first step of 2 biosynthetic pathways, one leading to arginine and/or urea and the other to pyrimidine nucleotides. The large subunit (synthetase) binds the substrates ammonia (free or transferred from glutamine from the small subunit), hydrogencarbonate and ATP and carries out an ATP-coupled ligase reaction, activating hydrogencarbonate by forming carboxy phosphate which reacts with ammonia to form carbamoyl phosphate. In Natranaerobius thermophilus (strain ATCC BAA-1301 / DSM 18059 / JW/NM-WN-LF), this protein is Carbamoyl phosphate synthase large chain.